Reading from the N-terminus, the 147-residue chain is Large ribosomal subunit protein uL15 (147 aa).

Residues 1–15 (MKLHELKPAKGAVKE) are compositionally biased toward basic and acidic residues. The segment at 1–47 (MKLHELKPAKGAVKEVKRKGRGRATGNGKTAGRGHNGQNSRSGGGVR) is disordered. A compositionally biased stretch (gly residues) spans 23 to 35 (RATGNGKTAGRGH).

It belongs to the universal ribosomal protein uL15 family. In terms of assembly, part of the 50S ribosomal subunit.

Functionally, binds to the 23S rRNA. In Alkaliphilus metalliredigens (strain QYMF), this protein is Large ribosomal subunit protein uL15.